Consider the following 304-residue polypeptide: MTTLRIATRKSPLALWQSEHVATALRQHHPGLEVVLVPMSTRGDEVLDRSLAAIGGKGLFLKELELAMLRGEADCAVHSLKDVPMELDAPFVLPAILERGDPADALVSNLYATLQALPLGARVGTSSLRRQAQLRAARPDLELIDLRGNVNTRLAKLDNGGYDAIVLACAGLQRLGLEARITARLDAPEWLPAPAQGAVAVECRGDDARIHDLLAVLDAGRTRACVEAERAMNRALHGSCHVPVAAFARWEGEDLFLQGMVGSASDGRLIHAEAHGSPDATEDLGRRVADGLFEKGAAQLLAEL.

The residue at position 240 (Cys-240) is an S-(dipyrrolylmethanemethyl)cysteine.

Belongs to the HMBS family. Monomer. Requires dipyrromethane as cofactor.

It catalyses the reaction 4 porphobilinogen + H2O = hydroxymethylbilane + 4 NH4(+). It participates in porphyrin-containing compound metabolism; protoporphyrin-IX biosynthesis; coproporphyrinogen-III from 5-aminolevulinate: step 2/4. In terms of biological role, tetrapolymerization of the monopyrrole PBG into the hydroxymethylbilane pre-uroporphyrinogen in several discrete steps. The protein is Porphobilinogen deaminase of Xanthomonas campestris pv. campestris (strain B100).